Consider the following 230-residue polypeptide: Cytochrome c-552 (230 aa).

The first 47 residues, 1-47, serve as a signal peptide directing secretion; that stretch reads MTTYLSQDRLRNKENDTMTYQHSKMYQSRTFLLFSALLLVAGQASAA. Heme c contacts are provided by C63, C66, H67, C166, C169, and H170.

In terms of processing, binds 2 heme c groups covalently per subunit.

Its subcellular location is the periplasm. Diheme, high potential cytochrome c. The polypeptide is Cytochrome c-552 (cyc1) (Acidithiobacillus ferridurans).